We begin with the raw amino-acid sequence, 166 residues long: ATP synthase subunit b (166 aa).

Residues 27–47 (FFVVLLIFLIVLGVIAKWVVP) form a helical membrane-spanning segment. The interval 124-143 (SADQQLSQQGSAAQSELQSS) is disordered.

The protein belongs to the ATPase B chain family. In terms of assembly, F-type ATPases have 2 components, F(1) - the catalytic core - and F(0) - the membrane proton channel. F(1) has five subunits: alpha(3), beta(3), gamma(1), delta(1), epsilon(1). F(0) has three main subunits: a(1), b(2) and c(10-14). The alpha and beta chains form an alternating ring which encloses part of the gamma chain. F(1) is attached to F(0) by a central stalk formed by the gamma and epsilon chains, while a peripheral stalk is formed by the delta and b chains.

It localises to the cell membrane. In terms of biological role, f(1)F(0) ATP synthase produces ATP from ADP in the presence of a proton or sodium gradient. F-type ATPases consist of two structural domains, F(1) containing the extramembraneous catalytic core and F(0) containing the membrane proton channel, linked together by a central stalk and a peripheral stalk. During catalysis, ATP synthesis in the catalytic domain of F(1) is coupled via a rotary mechanism of the central stalk subunits to proton translocation. Functionally, component of the F(0) channel, it forms part of the peripheral stalk, linking F(1) to F(0). This is ATP synthase subunit b from Mycolicibacterium vanbaalenii (strain DSM 7251 / JCM 13017 / BCRC 16820 / KCTC 9966 / NRRL B-24157 / PYR-1) (Mycobacterium vanbaalenii).